The chain runs to 209 residues: Ribonuclease HII (209 aa).

Positions 7-198 (GPVAGVDEAG…VAKAHQEWLH (192 aa)) constitute an RNase H type-2 domain. The a divalent metal cation site is built by Asp13, Glu14, and Asp107.

The protein belongs to the RNase HII family. Requires Mn(2+) as cofactor. Mg(2+) is required as a cofactor.

It localises to the cytoplasm. It carries out the reaction Endonucleolytic cleavage to 5'-phosphomonoester.. In terms of biological role, endonuclease that specifically degrades the RNA of RNA-DNA hybrids. The polypeptide is Ribonuclease HII (Corynebacterium glutamicum (strain ATCC 13032 / DSM 20300 / JCM 1318 / BCRC 11384 / CCUG 27702 / LMG 3730 / NBRC 12168 / NCIMB 10025 / NRRL B-2784 / 534)).